The chain runs to 458 residues: Fasciclin-like arabinogalactan protein 17 (458 aa).

A signal peptide spans 1 to 30 (MDRRIYGGSAVIHLFLFFSVLIFSAASALS). Residues 43-184 (NSNSVLVALL…GLIHGIERLL (142 aa)) form the FAS1 1 domain. N-linked (GlcNAc...) asparagine glycosylation is present at asparagine 80. Residues 207–262 (PEGAPEVDPRTNRLKKPAAPVPAGSPPALPIQSAMAPGPSLAPAPAPGPGGKQHHF) form a disordered region. The segment covering 225 to 235 (APVPAGSPPAL) has biased composition (pro residues). Residues 268–411 (VKDFIHTLLH…ISVQGIDGVL (144 aa)) enclose the FAS1 2 domain. An N-linked (GlcNAc...) asparagine glycan is attached at asparagine 290.

Belongs to the fasciclin-like AGP family.

It is found in the secreted. May be a cell surface adhesion protein. This Arabidopsis thaliana (Mouse-ear cress) protein is Fasciclin-like arabinogalactan protein 17 (FLA17).